The sequence spans 477 residues: Bifunctional protein HldE (477 aa).

Residues 1–318 are ribokinase; sequence MKVTLPEFER…ENAVRGRADT (318 aa). Lysine 179 carries the N6-acetyllysine modification. 195 to 198 contributes to the ATP binding site; sequence NLSE. Aspartate 264 is a catalytic residue. The cytidylyltransferase stretch occupies residues 344–477; sequence MTNGVFDILH…IKKIQQDKKG (134 aa).

In the N-terminal section; belongs to the carbohydrate kinase PfkB family. The protein in the C-terminal section; belongs to the cytidylyltransferase family. In terms of assembly, homodimer.

It carries out the reaction D-glycero-beta-D-manno-heptose 7-phosphate + ATP = D-glycero-beta-D-manno-heptose 1,7-bisphosphate + ADP + H(+). The catalysed reaction is D-glycero-beta-D-manno-heptose 1-phosphate + ATP + H(+) = ADP-D-glycero-beta-D-manno-heptose + diphosphate. The protein operates within nucleotide-sugar biosynthesis; ADP-L-glycero-beta-D-manno-heptose biosynthesis; ADP-L-glycero-beta-D-manno-heptose from D-glycero-beta-D-manno-heptose 7-phosphate: step 1/4. It participates in nucleotide-sugar biosynthesis; ADP-L-glycero-beta-D-manno-heptose biosynthesis; ADP-L-glycero-beta-D-manno-heptose from D-glycero-beta-D-manno-heptose 7-phosphate: step 3/4. Functionally, catalyzes the phosphorylation of D-glycero-D-manno-heptose 7-phosphate at the C-1 position to selectively form D-glycero-beta-D-manno-heptose-1,7-bisphosphate. In terms of biological role, catalyzes the ADP transfer from ATP to D-glycero-beta-D-manno-heptose 1-phosphate, yielding ADP-D-glycero-beta-D-manno-heptose. This Escherichia fergusonii (strain ATCC 35469 / DSM 13698 / CCUG 18766 / IAM 14443 / JCM 21226 / LMG 7866 / NBRC 102419 / NCTC 12128 / CDC 0568-73) protein is Bifunctional protein HldE.